A 166-amino-acid polypeptide reads, in one-letter code: Interleukin-2 (166 aa).

Residues 1 to 20 form the signal peptide; the sequence is MYSMQLASCVTLTLVLLVNS. The O-linked (GalNAc...) threonine glycan is linked to Thr23. A disulfide bridge connects residues Cys89 and Cys137.

It belongs to the IL-2 family.

The protein resides in the secreted. In terms of biological role, cytokine produced by activated CD4-positive helper T-cells and to a lesser extend activated CD8-positive T-cells and natural killer (NK) cells that plays pivotal roles in the immune response and tolerance. Binds to a receptor complex composed of either the high-affinity trimeric IL-2R (IL2RA/CD25, IL2RB/CD122 and IL2RG/CD132) or the low-affinity dimeric IL-2R (IL2RB and IL2RG). Interaction with the receptor leads to oligomerization and conformation changes in the IL-2R subunits resulting in downstream signaling starting with phosphorylation of JAK1 and JAK3. In turn, JAK1 and JAK3 phosphorylate the receptor to form a docking site leading to the phosphorylation of several substrates including STAT5. This process leads to activation of several pathways including STAT, phosphoinositide-3-kinase/PI3K and mitogen-activated protein kinase/MAPK pathways. Functions as a T-cell growth factor and can increase NK-cell cytolytic activity as well. Promotes strong proliferation of activated B-cells and subsequently immunoglobulin production. Plays a pivotal role in regulating the adaptive immune system by controlling the survival and proliferation of regulatory T-cells, which are required for the maintenance of immune tolerance. Moreover, participates in the differentiation and homeostasis of effector T-cell subsets, including Th1, Th2, Th17 as well as memory CD8-positive T-cells. The polypeptide is Interleukin-2 (Il2) (Mus spretus (Western Mediterranean mouse)).